Reading from the N-terminus, the 313-residue chain is NAD-capped RNA hydrolase NudC (313 aa).

Arginine 111 is a binding site for substrate. Residues 168–293 (PRIDPAVICL…DWSSASESKL (126 aa)) enclose the Nudix hydrolase domain. Residues alanine 202, glutamate 218, and glutamate 222 each coordinate a divalent metal cation. The Nudix box motif lies at 203-224 (GFVEAGESFEVCVAREIREEIG). A substrate-binding site is contributed by 236–243 (QPWPFPRS). Residue glutamate 264 coordinates a divalent metal cation.

The protein belongs to the Nudix hydrolase family. NudC subfamily. Homodimer. The cofactor is Mg(2+). Mn(2+) serves as cofactor.

The catalysed reaction is a 5'-end NAD(+)-phospho-ribonucleoside in mRNA + H2O = a 5'-end phospho-adenosine-phospho-ribonucleoside in mRNA + beta-nicotinamide D-ribonucleotide + 2 H(+). It carries out the reaction NAD(+) + H2O = beta-nicotinamide D-ribonucleotide + AMP + 2 H(+). The enzyme catalyses NADH + H2O = reduced beta-nicotinamide D-ribonucleotide + AMP + 2 H(+). Its function is as follows. mRNA decapping enzyme that specifically removes the nicotinamide adenine dinucleotide (NAD) cap from a subset of mRNAs by hydrolyzing the diphosphate linkage to produce nicotinamide mononucleotide (NMN) and 5' monophosphate mRNA. The NAD-cap is present at the 5'-end of some mRNAs and stabilizes RNA against 5'-processing. Has preference for mRNAs with a 5'-end purine. Catalyzes the hydrolysis of a broad range of dinucleotide pyrophosphates. The chain is NAD-capped RNA hydrolase NudC from Mycobacterium bovis (strain ATCC BAA-935 / AF2122/97).